The chain runs to 274 residues: Large ribosomal subunit protein uL2c (274 aa).

2 disordered regions span residues 1–22 (MAIH…DSQV) and 225–254 (PVDH…PALG).

It belongs to the universal ribosomal protein uL2 family. Part of the 50S ribosomal subunit.

It is found in the plastid. The protein resides in the chloroplast. The polypeptide is Large ribosomal subunit protein uL2c (rpl2) (Sinapis alba (White mustard)).